The primary structure comprises 454 residues: Allantoinase (454 aa).

6 residues coordinate Zn(2+): His58, His60, Lys149, His189, His245, and Asp318. Lys149 is subject to N6-carboxylysine.

Belongs to the metallo-dependent hydrolases superfamily. Allantoinase family. As to quaternary structure, homotetramer. Zn(2+) is required as a cofactor. In terms of processing, carboxylation allows a single lysine to coordinate two zinc ions.

It carries out the reaction (S)-allantoin + H2O = allantoate + H(+). The protein operates within nitrogen metabolism; (S)-allantoin degradation; allantoate from (S)-allantoin: step 1/1. Its function is as follows. Catalyzes the conversion of allantoin (5-ureidohydantoin) to allantoic acid by hydrolytic cleavage of the five-member hydantoin ring. The chain is Allantoinase from Enterococcus faecalis (strain ATCC 700802 / V583).